A 414-amino-acid chain; its full sequence is Esterase FrsA (414 aa).

This sequence belongs to the FrsA family.

It carries out the reaction a carboxylic ester + H2O = an alcohol + a carboxylate + H(+). Catalyzes the hydrolysis of esters. The protein is Esterase FrsA of Shigella boydii serotype 18 (strain CDC 3083-94 / BS512).